Consider the following 261-residue polypeptide: Probable cyclic nucleotide phosphodiesterase PSM_A2567 (261 aa).

The Fe cation site is built by D22, H24, D62, N94, H160, H198, and H200. Residues H24, D62, and 94–95 (NH) each bind AMP. H200 serves as a coordination point for AMP.

It belongs to the cyclic nucleotide phosphodiesterase class-III family. Requires Fe(2+) as cofactor.

The sequence is that of Probable cyclic nucleotide phosphodiesterase PSM_A2567 from Pseudoalteromonas sp. (strain SM9913).